Here is a 359-residue protein sequence, read N- to C-terminus: Aspartate carbamoyltransferase catalytic subunit (359 aa).

Carbamoyl phosphate is bound by residues arginine 52 and threonine 53. Residue lysine 81 coordinates L-aspartate. Positions 102, 130, and 133 each coordinate carbamoyl phosphate. L-aspartate contacts are provided by arginine 163 and arginine 224. Residues leucine 264 and proline 265 each contribute to the carbamoyl phosphate site.

It belongs to the aspartate/ornithine carbamoyltransferase superfamily. ATCase family. In terms of assembly, heterododecamer (2C3:3R2) of six catalytic PyrB chains organized as two trimers (C3), and six regulatory PyrI chains organized as three dimers (R2).

It carries out the reaction carbamoyl phosphate + L-aspartate = N-carbamoyl-L-aspartate + phosphate + H(+). The protein operates within pyrimidine metabolism; UMP biosynthesis via de novo pathway; (S)-dihydroorotate from bicarbonate: step 2/3. In terms of biological role, catalyzes the condensation of carbamoyl phosphate and aspartate to form carbamoyl aspartate and inorganic phosphate, the committed step in the de novo pyrimidine nucleotide biosynthesis pathway. This chain is Aspartate carbamoyltransferase catalytic subunit, found in Brachyspira hyodysenteriae (strain ATCC 49526 / WA1).